The sequence spans 478 residues: Dynein regulatory complex subunit 4 (478 aa).

Residues 1–12 (MAPKKKGKKGKA) show a composition bias toward basic residues. The interval 1–29 (MAPKKKGKKGKAKGTAIVDGVAPEDMTKE) is disordered. A regulates microtubule-binding region spans residues 1–114 (MAPKKKGKKG…LLYEHQNNLA (114 aa)). Coiled coils occupy residues 24 to 207 (EDMT…RKTE) and 242 to 426 (LNNL…ELAR). The interval 115–258 (EVKAEGTVVM…NSLKEQMEDM (144 aa)) is microtubule-binding. The tract at residues 357–478 (QQKTGFKNLL…GPAGLVGAPT (122 aa)) is interaction with SMO.

Belongs to the DRC4 family. Component of the nexin-dynein regulatory complex (N-DRC). Interacts with microtubules. Interacts with SMO. Interacts (via coiled-coil domains) with RAB3B (in GTP-bound form). Interacts with DRC1. Interacts with DRC7. In terms of tissue distribution, highly expressed in adult testes and lung. Weakly or not expressed in other tested tissues.

The protein resides in the cytoplasm. It localises to the cytoskeleton. The protein localises to the cell projection. Its subcellular location is the cilium. It is found in the flagellum. The protein resides in the cilium axoneme. It localises to the cilium basal body. The protein localises to the golgi apparatus. Its subcellular location is the flagellum axoneme. Functionally, component of the nexin-dynein regulatory complex (N-DRC), a key regulator of ciliary/flagellar motility which maintains the alignment and integrity of the distal axoneme and regulates microtubule sliding in motile axonemes. Plays an important role in the assembly of the N-DRC linker. Plays dual roles at both the primary (or non-motile) cilia to regulate hedgehog signaling and in motile cilia to coordinate cilia movement. Required for proper motile cilia functioning. Positively regulates ciliary smoothened (SMO)-dependent Hedgehog (Hh) signaling pathway by facilitating the trafficking of SMO into the cilium and the stimulation of SMO activity in a GRK2-dependent manner. May play a role in the spermatozoa motility. The protein is Dynein regulatory complex subunit 4 (Gas8) of Mus musculus (Mouse).